The sequence spans 276 residues: Putative hydro-lyase Xaut_1503 (276 aa).

The protein belongs to the D-glutamate cyclase family.

The chain is Putative hydro-lyase Xaut_1503 from Xanthobacter autotrophicus (strain ATCC BAA-1158 / Py2).